Here is a 129-residue protein sequence, read N- to C-terminus: MAKDTRSRKKVARRSVSEGIAHIHASFNNTIVTITDRQGNALAWATSGGQGFRGSRKSTPFAAQVAAEVAGKAAQEYGVKNIDVLVKGPGPGRESAVRALGALGYKVNSISDVTPIPHNGCRAPKKRRV.

This sequence belongs to the universal ribosomal protein uS11 family. As to quaternary structure, part of the 30S ribosomal subunit. Interacts with proteins S7 and S18. Binds to IF-3.

In terms of biological role, located on the platform of the 30S subunit, it bridges several disparate RNA helices of the 16S rRNA. Forms part of the Shine-Dalgarno cleft in the 70S ribosome. In Psychrobacter arcticus (strain DSM 17307 / VKM B-2377 / 273-4), this protein is Small ribosomal subunit protein uS11.